The chain runs to 301 residues: uncharacterized protein (301 aa).

2 disordered regions span residues 167-186 (DVHL…PKER) and 225-244 (ASES…EGAS). Residues 170–181 (LNSTTPPHTAQV) are compositionally biased toward polar residues. The span at 226–237 (SESSLETSSVSS) shows a compositional bias: low complexity.

This is an uncharacterized protein from Mus musculus (Mouse).